Consider the following 276-residue polypeptide: MARVTVSVLKDKKKRKEKISMLTAYDYSLAGMVDEAGIDMILVGDSLGNVVLGYDNTLAVTMDDMIHHSKTVVRASKNAMVVGDMPFLSYHISKKEAVRNAGRFIQEAGCSAVKLEGGSERVDTVKAILDAQIPVMGHIGLTPQSVHQFGGFKVQGKDLETAKKLVEDARALDQAGVYCIVLECVPSELARRVTEEISVPTIGIGAGPYCDGQVLVINDMLGMFRGFTPKFVRKFANLEPLIMEALKNYKAEVEAGTFPAEEHCFTIKEEVLDRLY.

Mg(2+) is bound by residues Asp-45 and Asp-84. Residues 45 to 46, Asp-84, and Lys-114 contribute to the 3-methyl-2-oxobutanoate site; that span reads DS. Glu-116 contributes to the Mg(2+) binding site. Glu-183 serves as the catalytic Proton acceptor.

This sequence belongs to the PanB family. Homodecamer; pentamer of dimers. It depends on Mg(2+) as a cofactor.

The protein localises to the cytoplasm. The catalysed reaction is 3-methyl-2-oxobutanoate + (6R)-5,10-methylene-5,6,7,8-tetrahydrofolate + H2O = 2-dehydropantoate + (6S)-5,6,7,8-tetrahydrofolate. It functions in the pathway cofactor biosynthesis; (R)-pantothenate biosynthesis; (R)-pantoate from 3-methyl-2-oxobutanoate: step 1/2. Functionally, catalyzes the reversible reaction in which hydroxymethyl group from 5,10-methylenetetrahydrofolate is transferred onto alpha-ketoisovalerate to form ketopantoate. The chain is 3-methyl-2-oxobutanoate hydroxymethyltransferase from Syntrophomonas wolfei subsp. wolfei (strain DSM 2245B / Goettingen).